The primary structure comprises 314 residues: Aspartate carbamoyltransferase catalytic subunit (314 aa).

R55 and T56 together coordinate carbamoyl phosphate. K83 is a binding site for L-aspartate. Residues R105, H139, and Q142 each contribute to the carbamoyl phosphate site. Residues R172 and R226 each coordinate L-aspartate. Residues G267 and P268 each contribute to the carbamoyl phosphate site.

It belongs to the aspartate/ornithine carbamoyltransferase superfamily. ATCase family. Heterododecamer (2C3:3R2) of six catalytic PyrB chains organized as two trimers (C3), and six regulatory PyrI chains organized as three dimers (R2).

It catalyses the reaction carbamoyl phosphate + L-aspartate = N-carbamoyl-L-aspartate + phosphate + H(+). Its pathway is pyrimidine metabolism; UMP biosynthesis via de novo pathway; (S)-dihydroorotate from bicarbonate: step 2/3. Functionally, catalyzes the condensation of carbamoyl phosphate and aspartate to form carbamoyl aspartate and inorganic phosphate, the committed step in the de novo pyrimidine nucleotide biosynthesis pathway. This Rhodococcus jostii (strain RHA1) protein is Aspartate carbamoyltransferase catalytic subunit.